The following is a 185-amino-acid chain: Elongation factor P (185 aa).

The protein belongs to the elongation factor P family.

The protein resides in the cytoplasm. The protein operates within protein biosynthesis; polypeptide chain elongation. Its function is as follows. Involved in peptide bond synthesis. Stimulates efficient translation and peptide-bond synthesis on native or reconstituted 70S ribosomes in vitro. Probably functions indirectly by altering the affinity of the ribosome for aminoacyl-tRNA, thus increasing their reactivity as acceptors for peptidyl transferase. In Caldicellulosiruptor saccharolyticus (strain ATCC 43494 / DSM 8903 / Tp8T 6331), this protein is Elongation factor P.